We begin with the raw amino-acid sequence, 194 residues long: Endo-1,4-beta-xylanase (194 aa).

Residue Gly1 is modified to N-acetylglycine. Residues 1–191 (GTTPNSEGWH…SSGYARITVA (191 aa)) enclose the GH11 domain. Glu86 (nucleophile) is an active-site residue. An intrachain disulfide couples Cys110 to Cys154. Residue Glu178 is the Proton donor of the active site.

Belongs to the glycosyl hydrolase 11 (cellulase G) family.

The enzyme catalyses Endohydrolysis of (1-&gt;4)-beta-D-xylosidic linkages in xylans.. Its pathway is glycan degradation; xylan degradation. This is Endo-1,4-beta-xylanase from Byssochlamys spectabilis (Paecilomyces variotii).